The chain runs to 317 residues: Methionyl-tRNA formyltransferase (317 aa).

A (6S)-5,6,7,8-tetrahydrofolate-binding site is contributed by 110 to 113 (SLLP).

The protein belongs to the Fmt family.

It catalyses the reaction L-methionyl-tRNA(fMet) + (6R)-10-formyltetrahydrofolate = N-formyl-L-methionyl-tRNA(fMet) + (6S)-5,6,7,8-tetrahydrofolate + H(+). In terms of biological role, attaches a formyl group to the free amino group of methionyl-tRNA(fMet). The formyl group appears to play a dual role in the initiator identity of N-formylmethionyl-tRNA by promoting its recognition by IF2 and preventing the misappropriation of this tRNA by the elongation apparatus. This is Methionyl-tRNA formyltransferase from Lactiplantibacillus plantarum (strain ATCC BAA-793 / NCIMB 8826 / WCFS1) (Lactobacillus plantarum).